Consider the following 210-residue polypeptide: Pyrrolidone-carboxylate peptidase (210 aa).

Catalysis depends on residues glutamate 80, cysteine 143, and histidine 162.

This sequence belongs to the peptidase C15 family. In terms of assembly, homotetramer.

The protein localises to the cytoplasm. It carries out the reaction Release of an N-terminal pyroglutamyl group from a polypeptide, the second amino acid generally not being Pro.. Removes 5-oxoproline from various penultimate amino acid residues except L-proline. This Chromobacterium violaceum (strain ATCC 12472 / DSM 30191 / JCM 1249 / CCUG 213 / NBRC 12614 / NCIMB 9131 / NCTC 9757 / MK) protein is Pyrrolidone-carboxylate peptidase.